Consider the following 266-residue polypeptide: Dihydropteroate synthase (266 aa).

Residues 12-260 enclose the Pterin-binding domain; sequence AAIMGILNVT…DVKANQDIVA (249 aa). Position 19 (Asn-19) interacts with Mg(2+). (7,8-dihydropterin-6-yl)methyl diphosphate-binding positions include Thr-59, Asp-93, Asn-112, Asp-176, Lys-212, and 248–250; that span reads RVH.

This sequence belongs to the DHPS family. Homodimer or homotrimer. Requires Mg(2+) as cofactor.

The enzyme catalyses (7,8-dihydropterin-6-yl)methyl diphosphate + 4-aminobenzoate = 7,8-dihydropteroate + diphosphate. It participates in cofactor biosynthesis; tetrahydrofolate biosynthesis; 7,8-dihydrofolate from 2-amino-4-hydroxy-6-hydroxymethyl-7,8-dihydropteridine diphosphate and 4-aminobenzoate: step 1/2. Functionally, catalyzes the condensation of para-aminobenzoate (pABA) with 6-hydroxymethyl-7,8-dihydropterin diphosphate (DHPt-PP) to form 7,8-dihydropteroate (H2Pte), the immediate precursor of folate derivatives. The polypeptide is Dihydropteroate synthase (folP) (Streptococcus pyogenes serotype M3 (strain ATCC BAA-595 / MGAS315)).